The following is a 1151-amino-acid chain: Phospholipid-transporting ATPase NEO1 (1151 aa).

Disordered stretches follow at residues 1-21 and 73-95; these read MPNP…NNNQ and LDNF…THPL. Over 1-184 the chain is Extracellular; the sequence is MPNPPSFKSH…LSNAKYNAVT (184 aa). Polar residues predominate over residues 12–21; the sequence is QNLFNSNNNQ. Residues 51 to 104 form a required for endosome-to-Golgi sorting region; that stretch reads EPLSKHNTVGDRESFEMRTVDDLDNFSNHSSDSHRKSSNTDTHPLMYDNRLSQD. Position 102 is a phosphoserine (Ser102). A helical transmembrane segment spans residues 185–205; that stretch reads FVPTLLYEQFKFFYNLYFLVV. Topologically, residues 206 to 209 are cytoplasmic; sequence ALSQ. The helical transmembrane segment at 210–230 threads the bilayer; the sequence is AVPALRIGYLSSYIVPLAFVL. Residues 231-367 are Extracellular-facing; that stretch reads TVTMAKEAID…TSNPLSVDNT (137 aa). The helical transmembrane segment at 368-388 threads the bilayer; the sequence is LWANTVLASSGFCIACVVYTG. Topologically, residues 389–416 are cytoplasmic; it reads RDTRQAMNTTTAKVKTGLLELEINSISK. The helical transmembrane segment at 417–437 threads the bilayer; it reads ILCACVFALSILLVAFAGFHN. Residue Asp438 is a topological domain, extracellular. Residues 439–459 traverse the membrane as a helical segment; sequence DWYIDILRYLILFSTIIPVSL. Residues 460–947 are Cytoplasmic-facing; that stretch reads RVNLDLAKSV…KLAQFVMHRG (488 aa). Catalysis depends on Asp503, which acts as the 4-aspartylphosphate intermediate. Positions 503, 504, and 505 each coordinate ATP. Position 503 (Asp503) interacts with Mg(2+). Thr505 is a Mg(2+) binding site. Ser551 is modified (phosphoserine). Glu597, Phe640, Ser642, Lys645, Lys664, Arg693, Thr694, Thr774, Gly775, Asp776, Arg856, and Lys862 together coordinate ATP. Asp882 is a binding site for Mg(2+). Positions 885 and 886 each coordinate ATP. Asp886 contributes to the Mg(2+) binding site. The chain crosses the membrane as a helical span at residues 948 to 968; it reads LIIAICQAVYSICSLFEPIAL. At 969-970 the chain is on the extracellular side; sequence YQ. A helical transmembrane segment spans residues 971 to 991; sequence GWLMVGYATCYTMAPVFSLTL. Over 992–1020 the chain is Cytoplasmic; the sequence is DHDIEESLTKIYPELYKELTEGKSLSYKT. Residues 1021–1041 traverse the membrane as a helical segment; that stretch reads FFVWVLLSLFQGSVIQLFSQA. Residues 1042–1052 lie on the Extracellular side of the membrane; the sequence is FTSLLDTDFTR. The helical transmembrane segment at 1053 to 1073 threads the bilayer; sequence MVAISFTALVVNELIMVALEI. Residues 1074-1078 are Cytoplasmic-facing; sequence YTWNK. Residues 1079–1099 form a helical membrane-spanning segment; the sequence is TMLVTEIATLLFYIVSVPFLG. Over 1100 to 1109 the chain is Extracellular; the sequence is DYFDLGYMTT. A helical transmembrane segment spans residues 1110 to 1130; the sequence is VNYYAGLLVILLISIFPVWTA. The Cytoplasmic segment spans residues 1131–1151; that stretch reads KAIYRRLHPPSYAKVQEFATP. The tract at residues 1131–1151 is required for endosomal targeting; that stretch reads KAIYRRLHPPSYAKVQEFATP.

Belongs to the cation transport ATPase (P-type) (TC 3.A.3) family. Type IV subfamily. As to quaternary structure, interacts with MON2. Interacts with ANY1. Functions without a CDC50/LEM3 family accessory subunit. The cofactor is Mg(2+).

Its subcellular location is the endosome membrane. The protein resides in the golgi apparatus membrane. It carries out the reaction ATP + H2O + phospholipidSide 1 = ADP + phosphate + phospholipidSide 2.. It catalyses the reaction a 1,2-diacyl-sn-glycero-3-phospho-L-serine(out) + ATP + H2O = a 1,2-diacyl-sn-glycero-3-phospho-L-serine(in) + ADP + phosphate + H(+). The catalysed reaction is a 1,2-diacyl-sn-glycero-3-phosphoethanolamine(out) + ATP + H2O = a 1,2-diacyl-sn-glycero-3-phosphoethanolamine(in) + ADP + phosphate + H(+). Flippase that catalyzes the hydrolysis of ATP coupled to the transport of lysophosphatidylserine, phosphatidylethanolamine, and phosphatidylserine from the lumenal to the cytosolic leaflet of the Golgi apparatus membrane and ensures the maintenance of asymmetric distribution of phospholipids. Does not appear to transport phosphatidylcholine or sphingomyelin. May be involved in recycling from endosomes by driving the formation of SNX3-dependent recycling tubules. Required for COPI retrograde transport from the Golgi to the endoplasmic reticulum, Golgi-endosome trafficking, and Golgi-dependent protein glycosylation. This is Phospholipid-transporting ATPase NEO1 from Saccharomyces cerevisiae (strain ATCC 204508 / S288c) (Baker's yeast).